Here is a 141-residue protein sequence, read N- to C-terminus: Nucleoside diphosphate kinase (141 aa).

ATP contacts are provided by K11, F59, R87, T93, R104, and N114. H117 acts as the Pros-phosphohistidine intermediate in catalysis.

Belongs to the NDK family. In terms of assembly, homotetramer. Mg(2+) serves as cofactor.

The protein resides in the cytoplasm. The catalysed reaction is a 2'-deoxyribonucleoside 5'-diphosphate + ATP = a 2'-deoxyribonucleoside 5'-triphosphate + ADP. The enzyme catalyses a ribonucleoside 5'-diphosphate + ATP = a ribonucleoside 5'-triphosphate + ADP. Its function is as follows. Major role in the synthesis of nucleoside triphosphates other than ATP. The ATP gamma phosphate is transferred to the NDP beta phosphate via a ping-pong mechanism, using a phosphorylated active-site intermediate. In Cupriavidus metallidurans (strain ATCC 43123 / DSM 2839 / NBRC 102507 / CH34) (Ralstonia metallidurans), this protein is Nucleoside diphosphate kinase.